The following is a 908-amino-acid chain: Probable serine/threonine-protein kinase DDB_G0278521 (908 aa).

The Extracellular segment spans residues 1–153 (MSNNKIIESL…RGEKLSTLDR (153 aa)). Residues 154-174 (IICFSIIYSQDQILLFLLNFI) traverse the membrane as a helical segment. Residues 175–908 (LSNINCNNNN…SDQNDSDLYD (734 aa)) are Cytoplasmic-facing. ANK repeat units follow at residues 258-289 (LKVY…NVYN), 300-326 (TNRS…NIHD), 330-361 (KGML…ALDQ), 362-391 (SNNT…RLSI), and 395-424 (NGRY…KMNS). Over residues 461–472 (NSNNLTNSNSSS) the composition is skewed to low complexity. Residues 461–491 (NSNNLTNSNSSSVGGLRISNGGNTQQQSIQI) are disordered. The span at 480–490 (NGGNTQQQSIQ) shows a compositional bias: polar residues. An ANK 6 repeat occupies 495 to 524 (ENNTPIDLLVLNNHFTIAIELLKYEGYIVG). Residues 530-817 (FKTARKIGAG…LPIANIPKFL (288 aa)) form the Protein kinase domain. ATP contacts are provided by residues 536–544 (IGAGAFGDV) and Lys557. The active-site Proton acceptor is the Asp677.

This sequence belongs to the protein kinase superfamily. TKL Ser/Thr protein kinase family.

It localises to the membrane. It carries out the reaction L-seryl-[protein] + ATP = O-phospho-L-seryl-[protein] + ADP + H(+). It catalyses the reaction L-threonyl-[protein] + ATP = O-phospho-L-threonyl-[protein] + ADP + H(+). The protein is Probable serine/threonine-protein kinase DDB_G0278521 of Dictyostelium discoideum (Social amoeba).